Here is a 405-residue protein sequence, read N- to C-terminus: uncharacterized protein (405 aa).

Positions 1–20 are cleaved as a signal peptide; the sequence is MKAKLALSIIGLVLASLVAG. N-acetylcysteine is present on Cys-21. The S-archaeol cysteine moiety is linked to residue Cys-21.

Belongs to the BMP lipoprotein family.

The protein localises to the cell membrane. This is an uncharacterized protein from Pyrococcus horikoshii (strain ATCC 700860 / DSM 12428 / JCM 9974 / NBRC 100139 / OT-3).